Reading from the N-terminus, the 575-residue chain is Regulatory protein zeste (575 aa).

The segment covering 1-26 (MSAQGEGGGAGGSGGGGAGSDGGGNA) has biased composition (gly residues). 2 disordered regions span residues 1–53 (MSAQ…LPLT) and 151–174 (SVAS…VKVE). Residues 2–47 (SAQGEGGGAGGSGGGGAGSDGGGNAGQSSTGSGTVAVTNGGNSSAK) form a hydrophobic region. The span at 31-51 (TGSGTVAVTNGGNSSAKNQLP) shows a compositional bias: polar residues. The DNA-binding element occupies 48-128 (NQLPLTPRFT…WLNSRLRKQY (81 aa)). Low complexity predominate over residues 151-164 (SVASAVPQQQQQQH).

As to quaternary structure, self-associates forming complexes of several hundred monomers.

Its subcellular location is the nucleus. In terms of biological role, involved in transvection phenomena (= synapsis-dependent gene expression), where the synaptic pairing of chromosomes carrying genes with which zeste interacts influences the expression of these genes. Zeste binds to DNA and stimulates transcription from a nearby promoter. The protein is Regulatory protein zeste (z) of Drosophila melanogaster (Fruit fly).